A 106-amino-acid chain; its full sequence is Biogenesis of lysosome-related organelles complex 1 subunit 4 (106 aa).

The stretch at 53–106 (THSEGLSEQLKMTEKNILEMENLFDQIDQLCLFVQKAKSDLDKLEKLYNVVDRQ) forms a coiled coil.

The protein belongs to the BLOC1S4 family. As to quaternary structure, component of the biogenesis of lysosome-related organelles complex-1 (BLOC-1) composed at least of blos-1, blos-2, blos-4, dsbn-1, glo-2, mutd-1 and snpn-1. Interacts with glo-2.

Its function is as follows. Component of the biogenesis of lysosome-related organelles complex-1 (BLOC-1) involved in gut granule biogenesis. The protein is Biogenesis of lysosome-related organelles complex 1 subunit 4 (blos-4) of Caenorhabditis elegans.